The sequence spans 375 residues: Chaperone protein DnaJ (375 aa).

Positions 5–70 constitute a J domain; the sequence is DFYEVLGVER…SKRAAYDQYG (66 aa). Residues 134–212 form a CR-type zinc finger; the sequence is GTTVSIRVPT…CHGEGRVEEY (79 aa). Residues Cys147, Cys150, Cys164, Cys167, Cys186, Cys189, Cys200, and Cys203 each coordinate Zn(2+). CXXCXGXG motif repeat units follow at residues 147-154, 164-171, 186-193, and 200-207; these read CKPCDGSG, CPTCGGIG, CPRCHGQG, and CNSCHGEG.

Belongs to the DnaJ family. In terms of assembly, homodimer. It depends on Zn(2+) as a cofactor.

The protein localises to the cytoplasm. In terms of biological role, participates actively in the response to hyperosmotic and heat shock by preventing the aggregation of stress-denatured proteins and by disaggregating proteins, also in an autonomous, DnaK-independent fashion. Unfolded proteins bind initially to DnaJ; upon interaction with the DnaJ-bound protein, DnaK hydrolyzes its bound ATP, resulting in the formation of a stable complex. GrpE releases ADP from DnaK; ATP binding to DnaK triggers the release of the substrate protein, thus completing the reaction cycle. Several rounds of ATP-dependent interactions between DnaJ, DnaK and GrpE are required for fully efficient folding. Also involved, together with DnaK and GrpE, in the DNA replication of plasmids through activation of initiation proteins. The chain is Chaperone protein DnaJ from Pseudomonas entomophila (strain L48).